We begin with the raw amino-acid sequence, 244 residues long: Orotidine 5'-phosphate decarboxylase (244 aa).

Substrate contacts are provided by residues D20, K42, 70-79 (DLKFFDIPAT), T125, R186, Q195, G215, and R216. K72 acts as the Proton donor in catalysis.

Belongs to the OMP decarboxylase family. Type 1 subfamily. Homodimer.

It carries out the reaction orotidine 5'-phosphate + H(+) = UMP + CO2. Its pathway is pyrimidine metabolism; UMP biosynthesis via de novo pathway; UMP from orotate: step 2/2. Catalyzes the decarboxylation of orotidine 5'-monophosphate (OMP) to uridine 5'-monophosphate (UMP). This Xylella fastidiosa (strain M23) protein is Orotidine 5'-phosphate decarboxylase.